An 888-amino-acid polypeptide reads, in one-letter code: MDESALLDLLECPVCLERLDASAKVLPCQHTFCKRCLLGIVGSRNELRCPECRTLVGSGVEELPSNILLVRLLDGIKQRPWKPGPGGGSGTNCTNALRSQSSTVANCSSKDLQSSQGGQQPRVQSWSPPVRGIPQLPCAKALYNYEGKEPGDLKFSKGDIIILRRQVDENWYHGEVNGIHGFFPTNFVQIIKPLPQPPPQCKALYDFEVKDKEADKDCLPFAKDDVLTVIRRVDENWAEGMLADKIGIFPISYVEFNSAAKQLIEWDKPPVPGVDAGECSSAAAQSSTAPKHSDTKKNTKKRHSFTSLTMANKSSQASQNRHSMEISPPVLISSSNPTAAARISELSGLSCSAPSQVHISTTGLIVTPPPSSPVTTGPSFTFPSDVPYQAALGTLNPPLPPPPLLAATVLASTPPGATAAAAAAGMGPRPMAGSTDQIAHLRPQTRPSVYVAIYPYTPRKEDELELRKGEMFLVFERCQDGWFKGTSMHTSKIGVFPGNYVAPVTRAVTNASQAKVPMSTAGQTSRGVTMVSPSTAGGPAQKLQGNGVAGSPSVVPAAVVSAAHIQTSPQAKVLLHMTGQMTVNQARNAVRTVAAHNQERPTAAVTPIQVQNAAGLSPASVGLSHHSLASPQPAPLMPGSATHTAAISISRASAPLACAAAAPLTSPSITSASLEAEPSGRIVTVLPGLPTSPDSASSACGNSSATKPDKDSKKEKKGLLKLLSGASTKRKPRVSPPASPTLEVELGSAELPLQGAVGPELPPGGGHGRAGSCPVDGDGPVTTAVAGAALAQDAFHRKASSLDSAVPIAPPPRQACSSLGPVLNESRPVVCERHRVVVSYPPQSEAELELKEGDIVFVHKKREDGWFKGTLQRNGKTGLFPGSFVENI.

Residues 12 to 53 (CPVCLERLDASAKVLPCQHTFCKRCLLGIVGSRNELRCPECR) form an RING-type zinc finger. The segment covering 108-127 (SSKDLQSSQGGQQPRVQSWS) has biased composition (polar residues). The tract at residues 108–128 (SSKDLQSSQGGQQPRVQSWSP) is disordered. SH3 domains are found at residues 134 to 193 (PQLP…IIKP) and 196 to 259 (QPPP…FNSA). The segment at 275 to 321 (DAGECSSAAAQSSTAPKHSDTKKNTKKRHSFTSLTMANKSSQASQNR) is disordered. The interval 292 to 362 (HSDTKKNTKK…APSQVHISTT (71 aa)) is interaction with RAC1. A Phosphoserine modification is found at Ser-304. Polar residues predominate over residues 305-321 (FTSLTMANKSSQASQNR). Residues 440-543 (HLRPQTRPSV…STAGGPAQKL (104 aa)) are interaction with AKT2. The region spanning 445-506 (TRPSVYVAIY…PGNYVAPVTR (62 aa)) is the SH3 3 domain. 3 disordered regions span residues 516-548 (VPMS…GNGV), 620-639 (SVGL…LMPG), and 684-741 (TVLP…ASPT). Residues 520 to 535 (TAGQTSRGVTMVSPST) are compositionally biased toward polar residues. Ser-532 bears the Phosphoserine mark. Positions 692 to 704 (SPDSASSACGNSS) are enriched in polar residues. Positions 707-718 (KPDKDSKKEKKG) are enriched in basic and acidic residues. Position 735 is a phosphoserine (Ser-735). Residues 829-888 (VVCERHRVVVSYPPQSEAELELKEGDIVFVHKKREDGWFKGTLQRNGKTGLFPGSFVENI) enclose the SH3 4 domain.

Belongs to the SH3RF family. As to quaternary structure, interacts with RAC1; in a GTP-dependent manner. Interacts with MAP3K10/MLK2 and MAP3K11/MLK3. Interacts with MAPK8IP; this interaction leads to the PJAC complex (POSH-JIP or SH3RF1/MAPK8IP apoptotic complex) with a 1:1 ratio. Interacts with SIAH1. Interacts with HERP1. Probably part of a signaling complex that may contain SH3RF1, MAPK8IP, DLK1, MAP2K4/MKK4, MAP2K7/MKK7, MAPK8/JNK1, MAPK9/JNK2, AKT1 and AKT2. Found in a complex with RAC2, MAP3K7/TAK1, MAP2K7/MKK7, MAPK8IP1/JIP1, MAPK8/JNK1 and MAPK9/JNK2. Found in a complex with RAC1, MAP3K11/MLK3, MAP2K7/MKK7, MAPK8IP1/JIP1 and MAPK8/JNK1. Interacts with SH3RF2. Post-translationally, phosphorylated at Ser-304 by AKT1 and AKT2. When phosphorylated, it has reduced ability to bind Rac. In terms of processing, autoubiquitinated. Ubiquitinated by SH3RF2, leading to proteasome-mediated degradation.

The protein resides in the cytoplasm. It is found in the perinuclear region. It localises to the cell projection. Its subcellular location is the lamellipodium. The protein localises to the golgi apparatus. The protein resides in the trans-Golgi network. It catalyses the reaction S-ubiquitinyl-[E2 ubiquitin-conjugating enzyme]-L-cysteine + [acceptor protein]-L-lysine = [E2 ubiquitin-conjugating enzyme]-L-cysteine + N(6)-ubiquitinyl-[acceptor protein]-L-lysine.. It participates in protein modification; protein ubiquitination. Has E3 ubiquitin-protein ligase activity. In the absence of an external substrate, it can catalyze self-ubiquitination. Stimulates ubiquitination of potassium channel KCNJ1, enhancing it's dynamin-dependent and clathrin-independent endocytosis. Acts as a scaffold protein that coordinates with MAPK8IP1/JIP1 in organizing different components of the JNK pathway, including RAC1 or RAC2, MAP3K11/MLK3 or MAP3K7/TAK1, MAP2K7/MKK7, MAPK8/JNK1 and/or MAPK9/JNK2 into a functional multiprotein complex to ensure the effective activation of the JNK signaling pathway. Regulates the differentiation of CD4(+) and CD8(+) T-cells and promotes T-helper 1 (Th1) cell differentiation. Regulates the activation of MAPK8/JNK1 and MAPK9/JNK2 in CD4(+) T-cells and the activation of MAPK8/JNK1 in CD8(+) T-cells. Plays a crucial role in the migration of neocortical neurons in the developing brain. Controls proper cortical neuronal migration and the formation of proximal cytoplasmic dilation in the leading process (PCDLP) in migratory neocortical neurons by regulating the proper localization of activated RAC1 and F-actin assembly. In terms of biological role, (Microbial infection) Plays an essential role in the targeting of HIV-1 Gag to the plasma membrane, this function is dependent on it's RING domain, and hence it's E3 ligase activity. In Homo sapiens (Human), this protein is E3 ubiquitin-protein ligase SH3RF1 (SH3RF1).